Consider the following 319-residue polypeptide: Lipoyl synthase (319 aa).

Positions 5–31 are disordered; sequence LDTISANPVRPRHPEKANRPDALSPPK. [4Fe-4S] cluster-binding residues include C61, C66, C72, C87, C91, C94, and S300. One can recognise a Radical SAM core domain in the interval 73–289; that stretch reads WDKKHATFMI…ETVAYTKGFL (217 aa).

The protein belongs to the radical SAM superfamily. Lipoyl synthase family. [4Fe-4S] cluster is required as a cofactor.

Its subcellular location is the cytoplasm. The enzyme catalyses [[Fe-S] cluster scaffold protein carrying a second [4Fe-4S](2+) cluster] + N(6)-octanoyl-L-lysyl-[protein] + 2 oxidized [2Fe-2S]-[ferredoxin] + 2 S-adenosyl-L-methionine + 4 H(+) = [[Fe-S] cluster scaffold protein] + N(6)-[(R)-dihydrolipoyl]-L-lysyl-[protein] + 4 Fe(3+) + 2 hydrogen sulfide + 2 5'-deoxyadenosine + 2 L-methionine + 2 reduced [2Fe-2S]-[ferredoxin]. It participates in protein modification; protein lipoylation via endogenous pathway; protein N(6)-(lipoyl)lysine from octanoyl-[acyl-carrier-protein]: step 2/2. Catalyzes the radical-mediated insertion of two sulfur atoms into the C-6 and C-8 positions of the octanoyl moiety bound to the lipoyl domains of lipoate-dependent enzymes, thereby converting the octanoylated domains into lipoylated derivatives. The sequence is that of Lipoyl synthase from Nitrobacter winogradskyi (strain ATCC 25391 / DSM 10237 / CIP 104748 / NCIMB 11846 / Nb-255).